We begin with the raw amino-acid sequence, 393 residues long: Acetate kinase (393 aa).

Asn-6 lines the Mg(2+) pocket. Lys-13 contributes to the ATP binding site. Arg-87 lines the substrate pocket. The active-site Proton donor/acceptor is Asp-143. Residues 203 to 207, 278 to 280, and 326 to 330 each bind ATP; these read HLGNG, DMR, and GIGEN. A Mg(2+)-binding site is contributed by Glu-380.

This sequence belongs to the acetokinase family. Homodimer. Mg(2+) serves as cofactor. Requires Mn(2+) as cofactor.

It localises to the cytoplasm. The catalysed reaction is acetate + ATP = acetyl phosphate + ADP. The protein operates within metabolic intermediate biosynthesis; acetyl-CoA biosynthesis; acetyl-CoA from acetate: step 1/2. Functionally, catalyzes the formation of acetyl phosphate from acetate and ATP. Can also catalyze the reverse reaction. The protein is Acetate kinase of Mycoplasma mycoides subsp. mycoides SC (strain CCUG 32753 / NCTC 10114 / PG1).